The primary structure comprises 207 residues: Protein Nef (207 aa).

Gly-2 is lipidated: N-myristoyl glycine; by host. Ser-6 is subject to Phosphoserine; by host. Residues 62-66 (EEEEE) are acidic; interacts with host PACS1 and PACS2; stabilizes the interaction of NEF/MHC-I with host AP1M1; necessary for MHC-I internalization. Residues 70-79 (PVRPQVPLRP) are SH3-binding; interaction with Src family tyrosine kinases. A PxxP; stabilizes the interaction of NEF/MHC-I with host AP1M1; necessary for MHC-I internalization motif is present at residues 73-76 (PQVP). The interval 109 to 125 (EILDLWVYNTQGFFPDW) is mediates dimerization, Nef-PTE1 interaction. The segment at 149 to 181 (VDPSEVEEINEGENNCLLHPASLHGMEDEDREV) is binding to ATP6V1H. The Dileucine internalization motif; necessary for CD4 internalization motif lies at 165–166 (LL). The Diacidic; necessary for CD4 internalization motif lies at 175-176 (ED).

It belongs to the lentivirus primate group Nef protein family. In terms of assembly, monomer; cytosolic form. Homodimer; membrane bound form. Interacts with Nef associated p21-activated kinase (PAK2); this interaction activates PAK2. Associates with the Nef-MHC-I-AP1 complex; this complex is required for MHC-I internalization. Interacts (via C-terminus) with host PI3-kinase. Interacts with host PACS1; this interaction seems to be weak. Interacts with host PACS2. Interacts with host LCK and MAPK3; these interactions inhibit the kinase activity of the latter. Interacts with host ATP6V1H; this interaction may play a role in CD4 endocytosis. Associates with the CD4-Nef-AP2 complex; this complex is required for CD4 internalization. Interacts with host AP2 subunit alpha and AP2 subunit sigma2. Interacts with TCR-zeta chain; this interaction up-regulates the Fas ligand (FasL) surface expression. Interacts with host HCK, LYN, and SRC; these interactions activate the Src family kinases. Interacts with MAP3K5; this interaction inhibits the Fas and TNFR-mediated death signals. Interacts with beta-COP and PTE1. Interacts with human RACK1; this increases Nef phosphorylation by PKC. Interacts with TP53; this interaction decreases the half-life of TP53, protecting the infected cell against p53-mediated apoptosis. In terms of processing, the virion-associated Nef proteins are cleaved by the viral protease to release the soluble C-terminal core protein. Nef is probably cleaved concomitantly with viral structural proteins on maturation of virus particles. Myristoylated. Post-translationally, phosphorylated on serine residues, probably by host PKCdelta and theta.

Its subcellular location is the host cell membrane. The protein localises to the virion. It is found in the secreted. The protein resides in the host Golgi apparatus membrane. In terms of biological role, factor of infectivity and pathogenicity, required for optimal virus replication. Alters numerous pathways of T-lymphocyte function and down-regulates immunity surface molecules in order to evade host defense and increase viral infectivity. Alters the functionality of other immunity cells, like dendritic cells, monocytes/macrophages and NK cells. Functionally, in infected CD4(+) T-lymphocytes, down-regulates the surface MHC-I, mature MHC-II, CD4, CD28, CCR5 and CXCR4 molecules. Mediates internalization and degradation of host CD4 through the interaction of with the cytoplasmic tail of CD4, the recruitment of AP-2 (clathrin adapter protein complex 2), internalization through clathrin coated pits, and subsequent transport to endosomes and lysosomes for degradation. Diverts host MHC-I molecules to the trans-Golgi network-associated endosomal compartments by an endocytic pathway to finally target them for degradation. MHC-I down-regulation may involve AP-1 (clathrin adapter protein complex 1) or possibly Src family kinase-ZAP70/Syk-PI3K cascade recruited by PACS2. In consequence infected cells are masked for immune recognition by cytotoxic T-lymphocytes. Decreasing the number of immune receptors also prevents reinfection by more HIV particles (superinfection). Down-regulates host SERINC3 and SERINC5 thereby excluding these proteins from the viral particles. Virion infectivity is drastically higher when SERINC3 or SERINC5 are excluded from the viral envelope, because these host antiviral proteins impair the membrane fusion event necessary for subsequent virion penetration. Bypasses host T-cell signaling by inducing a transcriptional program nearly identical to that of anti-CD3 cell activation. Interaction with TCR-zeta chain up-regulates the Fas ligand (FasL). Increasing surface FasL molecules and decreasing surface MHC-I molecules on infected CD4(+) cells send attacking cytotoxic CD8+ T-lymphocytes into apoptosis. Its function is as follows. Plays a role in optimizing the host cell environment for viral replication without causing cell death by apoptosis. Protects the infected cells from apoptosis in order to keep them alive until the next virus generation is ready to strike. Inhibits the Fas and TNFR-mediated death signals by blocking MAP3K5/ASK1. Decreases the half-life of TP53, protecting the infected cell against p53-mediated apoptosis. Inhibits the apoptotic signals regulated by the Bcl-2 family proteins through the formation of a Nef/PI3-kinase/PAK2 complex that leads to activation of PAK2 and induces phosphorylation of host BAD. In terms of biological role, extracellular Nef protein targets CD4(+) T-lymphocytes for apoptosis by interacting with CXCR4 surface receptors. This is Protein Nef from Homo sapiens (Human).